A 295-amino-acid chain; its full sequence is Taste receptor type 2 member 120 (295 aa).

Residues 1–5 lie on the Extracellular side of the membrane; the sequence is MNLVE. A helical membrane pass occupies residues 6–26; it reads WIVTIIMMTEFLLGNCANVFI. The Cytoplasmic segment spans residues 27–45; that stretch reads TIVNFIDCVKRRKISSADR. Residues 46–66 form a helical membrane-spanning segment; the sequence is IITAIAIFRIGLLWAMLTNWH. Residues 67 to 80 lie on the Extracellular side of the membrane; it reads SHVFTPDTDNLQMR. A helical membrane pass occupies residues 81 to 101; that stretch reads VFGGITWAITNHFTTWLGTIL. Topologically, residues 102-127 are cytoplasmic; it reads SMFYLFKIANFSNSLFLHLKRKLDNV. Residues 128-148 form a helical membrane-spanning segment; it reads LLVIFLGSSLFLVAYLGMVNI. The Extracellular portion of the chain corresponds to 149-177; that stretch reads KKIAWMSIHEGNVTTKSKLKHVTSITNML. N-linked (GlcNAc...) asparagine glycosylation is present at Asn160. A helical transmembrane segment spans residues 178–198; that stretch reads LFSLINIVPFGISLNCVLLLI. At 199–228 the chain is on the cytoplasmic side; that stretch reads YSLSKHLKNMKFYGKGCQDQSTMVHIKALQ. The chain crosses the membrane as a helical span at residues 229-249; it reads TVVSFLLLYATYSSCVIISGW. Residues 250–255 are Extracellular-facing; that stretch reads SLQNAP. Residues 256-276 traverse the membrane as a helical segment; that stretch reads VFLFCVTIGSFYPAGHSCILI. Topologically, residues 277–295 are cytoplasmic; it reads WGNQKLKQVFLLLLRQMRC.

This sequence belongs to the G-protein coupled receptor T2R family.

It is found in the membrane. Putative taste receptor which may play a role in the perception of bitterness. In Mus musculus (Mouse), this protein is Taste receptor type 2 member 120.